We begin with the raw amino-acid sequence, 317 residues long: Acetyl-coenzyme A carboxylase carboxyl transferase subunit alpha (317 aa).

The 254-residue stretch at 40–293 (LEKRSADALK…GDIITASLRS (254 aa)) folds into the CoA carboxyltransferase C-terminal domain.

Belongs to the AccA family. In terms of assembly, acetyl-CoA carboxylase is a heterohexamer composed of biotin carboxyl carrier protein (AccB), biotin carboxylase (AccC) and two subunits each of ACCase subunit alpha (AccA) and ACCase subunit beta (AccD).

Its subcellular location is the cytoplasm. The enzyme catalyses N(6)-carboxybiotinyl-L-lysyl-[protein] + acetyl-CoA = N(6)-biotinyl-L-lysyl-[protein] + malonyl-CoA. Its pathway is lipid metabolism; malonyl-CoA biosynthesis; malonyl-CoA from acetyl-CoA: step 1/1. Its function is as follows. Component of the acetyl coenzyme A carboxylase (ACC) complex. First, biotin carboxylase catalyzes the carboxylation of biotin on its carrier protein (BCCP) and then the CO(2) group is transferred by the carboxyltransferase to acetyl-CoA to form malonyl-CoA. This is Acetyl-coenzyme A carboxylase carboxyl transferase subunit alpha from Brucella anthropi (strain ATCC 49188 / DSM 6882 / CCUG 24695 / JCM 21032 / LMG 3331 / NBRC 15819 / NCTC 12168 / Alc 37) (Ochrobactrum anthropi).